Consider the following 103-residue polypeptide: BLOC-1-related complex subunit 7 (103 aa).

Belongs to the BORCS7 family.

The protein resides in the lysosome membrane. Functionally, as part of a BORC-like complex may play a role in lysosomes movement and localization at the cell periphery. Associated with the cytosolic face of lysosomes, this complex may couple lysosomes to microtubule plus-end-directed kinesin motor. The protein is BLOC-1-related complex subunit 7 of Danio rerio (Zebrafish).